The sequence spans 691 residues: Dipeptidyl-peptidase 5 (691 aa).

The signal sequence occupies residues 1-20 (MKRTILSLLAAVSLAIPVYA). Catalysis depends on charge relay system residues S549, D634, and H666.

This sequence belongs to the peptidase S9C family. Homodimer.

It is found in the periplasm. Its function is as follows. Catalyzes the removal of dipeptides from the N-terminus of oligopeptides. Prefers Ala and hydrophobic residues at the P1 position, and has no preference for P2 residues. Shows the highest dipeptidyl peptidase activity toward the synthetic substrate Lys-Ala-methylcoumaryl-7-amide (Lys-Ala-MCA). Is likely involved in amino acid metabolism and bacterial growth/survival of asaccharolytic P.endodontalis, that utilizes amino acids from extracellular proteinaceous nutrients as energy and carbon sources. The protein is Dipeptidyl-peptidase 5 of Porphyromonas endodontalis (strain ATCC 35406 / DSM 24491 / JCM 8526 / CCUG 16442 / BCRC 14492 / NCTC 13058 / HG 370) (Bacteroides endodontalis).